The sequence spans 201 residues: Large ribosomal subunit protein uL4 (201 aa).

Positions 44–68 are disordered; that stretch reads RAQKSRAEVSGSGRKPWRQKGTGRA.

Belongs to the universal ribosomal protein uL4 family. Part of the 50S ribosomal subunit.

In terms of biological role, one of the primary rRNA binding proteins, this protein initially binds near the 5'-end of the 23S rRNA. It is important during the early stages of 50S assembly. It makes multiple contacts with different domains of the 23S rRNA in the assembled 50S subunit and ribosome. Forms part of the polypeptide exit tunnel. This chain is Large ribosomal subunit protein uL4, found in Buchnera aphidicola subsp. Acyrthosiphon pisum (strain 5A).